Here is a 546-residue protein sequence, read N- to C-terminus: NRAMP-like transporter smf-2 (546 aa).

The Cytoplasmic portion of the chain corresponds to 1–42 (MPGFQNANISDLAPPAREKTFDDTIAVKIPEDEKNTWFSWRK). Residues 43-63 (LWAFTGPGFLMSIAYLDPGNI) traverse the membrane as a helical segment. Residues 64-70 (ESDLQAG) lie on the Extracellular side of the membrane. Residues 71 to 91 (AQAEYKLLWVLLVSHIVGMLL) form a helical membrane-spanning segment. Over 92 to 119 (QRMSARLGVVSGKHMAEIAYDYYPLVPR) the chain is Cytoplasmic. Residues 120 to 140 (IILWLMIEIAIVCSDMQEVIG) form a helical membrane-spanning segment. At 141–152 (TAIAIYLLSSGK) the chain is on the extracellular side. A helical transmembrane segment spans residues 153–173 (IPLLVGVLITILDTFTFLFID). The Cytoplasmic portion of the chain corresponds to 174-181 (RYGIRKLE). Residues 182-202 (FIFVALISTMAISFGYEFVVM) traverse the membrane as a helical segment. Topologically, residues 203 to 228 (KPVLTKVLTGTVVPWCSGCGKEEIIT) are extracellular. Residues 229–249 (AISIFGAVIMPHNFYLHSALV) traverse the membrane as a helical segment. The Cytoplasmic segment spans residues 250-270 (KSRKVDRSSKTRIAEANKYFS). Residues 271 to 291 (IESAFALSVSFFINLFVLSVF) form a helical membrane-spanning segment. The Extracellular portion of the chain corresponds to 292–334 (ARGLYQKTNGDVNSMCLSHNDIPDSNVFPNNTSSVTVDLFQGG). Residue N321 is glycosylated (N-linked (GlcNAc...) asparagine). Residues 335-355 (IYLGCQFGLFAMIIWAIGIFA) form a helical membrane-spanning segment. The Cytoplasmic portion of the chain corresponds to 356–386 (AGQSSTMTGTYTGQFVMEGFVRISWPKWKRV). The helical transmembrane segment at 387-407 (LITRAVAITPTLILCIKAHGI) threads the bilayer. Topologically, residues 408–415 (KNLTGMND) are extracellular. N409 is a glycosylation site (N-linked (GlcNAc...) asparagine). The helical transmembrane segment at 416 to 436 (FLNCVQMVQLPFALIPMITFT) threads the bilayer. Over 437–453 (SSKRIMHNFRTSKPLQY) the chain is Cytoplasmic. The helical transmembrane segment at 454-474 (FSIICGIITIGINVYFIFQYV) threads the bilayer. Residues 475 to 483 (TENFGTGWL) are Extracellular-facing. The helical transmembrane segment at 484 to 504 (IFVIIGPFTLLYIAFILYLAI) threads the bilayer. The Cytoplasmic portion of the chain corresponds to 505-546 (YCLVACELMNDTVNLPGFDFHRTLELDAPWITETFVVNDVYF).

The protein belongs to the NRAMP family. In terms of tissue distribution, expressed in dopaminergic neurons (at protein level). Primarily expressed in mc1, mc2 and mc3 epithelial cells of the pharynx and vpil-6 pharyngeal-intestinal valve cells displaying an anterior-posterior expression gradient. Expressed in gonad sheath cells.

The protein resides in the apical cell membrane. It is found in the cytoplasmic vesicle membrane. In terms of biological role, probable divalent metal ion transporter which regulates Mn(2+) uptake. In Caenorhabditis elegans, this protein is NRAMP-like transporter smf-2.